Consider the following 102-residue polypeptide: Small ribosomal subunit protein uS10 (102 aa).

Belongs to the universal ribosomal protein uS10 family. As to quaternary structure, part of the 30S ribosomal subunit.

Functionally, involved in the binding of tRNA to the ribosomes. The protein is Small ribosomal subunit protein uS10 of Lactiplantibacillus plantarum (strain ATCC BAA-793 / NCIMB 8826 / WCFS1) (Lactobacillus plantarum).